Reading from the N-terminus, the 111-residue chain is UPF0060 membrane protein XAC3064 (111 aa).

4 consecutive transmembrane segments (helical) span residues 8 to 28, 32 to 52, 64 to 84, and 91 to 111; these read LLLF…PYLW, GGSV…VWLL, AAYG…VDGV, and LLGA…PRSA.

This sequence belongs to the UPF0060 family.

It localises to the cell inner membrane. This Xanthomonas axonopodis pv. citri (strain 306) protein is UPF0060 membrane protein XAC3064.